A 158-amino-acid chain; its full sequence is PRA1 family protein 2 (158 aa).

4 helical membrane passes run 36–58 (NLNF…TLFT), 62–79 (LLVA…LFFV), 88–108 (FAVL…VIVI), and 113–133 (GLTL…HSAL).

This sequence belongs to the PRA1 family.

It is found in the membrane. May act as a general Rab protein regulator. The sequence is that of PRA1 family protein 2 (prafB) from Dictyostelium discoideum (Social amoeba).